The chain runs to 424 residues: UPF0229 protein YPTS_2141 (424 aa).

The tract at residues Thr-84–Glu-109 is disordered. Over residues Gln-92 to Gly-105 the composition is skewed to gly residues.

This sequence belongs to the UPF0229 family.

This chain is UPF0229 protein YPTS_2141, found in Yersinia pseudotuberculosis serotype IB (strain PB1/+).